The primary structure comprises 299 residues: Maintenance of mitochondrial morphology protein 1 (299 aa).

Over 1-15 (MTNIIFSLQPTFTQG) the chain is Lumenal. A helical transmembrane segment spans residues 16-36 (LILGQLSVLVLLGLILKYLFL). The Cytoplasmic segment spans residues 37–299 (DSTKNPFETT…QEESKRQEEA (263 aa)). The interval 47 to 68 (SYHPQFDRKPARKQQAQDSQSQ) is disordered. In terms of domain architecture, SMP-LTD spans 73–281 (DVESLDWFNL…LPGLASVAEA (209 aa)).

This sequence belongs to the MMM1 family. Homodimer. Component of the ER-mitochondria encounter structure (ERMES) or MDM complex, composed of MMM1, MDM10, MDM12 and MDM34. An MMM1 homodimer associates with one molecule of MDM12 on each side in a pairwise head-to-tail manner, and the SMP-LTD domains of MMM1 and MDM12 generate a continuous hydrophobic tunnel for phospholipid trafficking.

The protein resides in the endoplasmic reticulum membrane. Component of the ERMES/MDM complex, which serves as a molecular tether to connect the endoplasmic reticulum (ER) and mitochondria. Components of this complex are involved in the control of mitochondrial shape and protein biogenesis, and function in nonvesicular lipid trafficking between the ER and mitochondria. The MDM12-MMM1 subcomplex functions in the major beta-barrel assembly pathway that is responsible for biogenesis of all outer membrane beta-barrel proteins, and acts in a late step after the SAM complex. The MDM10-MDM12-MMM1 subcomplex further acts in the TOM40-specific pathway after the action of the MDM12-MMM1 complex. Essential for establishing and maintaining the structure of mitochondria and maintenance of mtDNA nucleoids. In Coprinopsis cinerea (strain Okayama-7 / 130 / ATCC MYA-4618 / FGSC 9003) (Inky cap fungus), this protein is Maintenance of mitochondrial morphology protein 1.